The chain runs to 130 residues: Small ribosomal subunit protein uS9 (130 aa).

The disordered stretch occupies residues 109–130 (RVKERKKPGLKKARKARQFSKR). Positions 111–130 (KERKKPGLKKARKARQFSKR) are enriched in basic residues.

This sequence belongs to the universal ribosomal protein uS9 family.

The sequence is that of Small ribosomal subunit protein uS9 from Mycoplasma mobile (strain ATCC 43663 / 163K / NCTC 11711) (Mesomycoplasma mobile).